The chain runs to 1818 residues: Protein encore (1818 aa).

Disordered stretches follow at residues Ala-47–Gly-68, Ser-123–Asn-282, and Ala-317–Ser-413. A compositionally biased stretch (gly residues) spans Val-52 to Val-66. The segment covering Ala-124 to Gly-137 has biased composition (polar residues). Basic residues predominate over residues Gly-141–His-152. Low complexity-rich tracts occupy residues Glu-156–Gly-179, Asn-186–Ala-199, Gln-217–Val-233, and Asn-266–Asn-282. Phosphoserine occurs at positions 267 and 270. Residues Ala-317–Met-328 are compositionally biased toward basic and acidic residues. Ser-336 is modified (phosphoserine). Residues Asn-338–Pro-348 are compositionally biased toward basic and acidic residues. 2 stretches are compositionally biased toward low complexity: residues Asn-372 to Ile-381 and Asn-391 to Gly-410. Residues Arg-444 to Asn-508 form the R3H domain. Positions Arg-510–Gly-576 constitute an SUZ domain. A Phosphoserine modification is found at Ser-535. The span at Phe-557–Arg-568 shows a compositional bias: basic and acidic residues. 6 disordered regions span residues Phe-557 to Gln-806, Gln-885 to Pro-916, Pro-936 to Lys-959, Gly-1176 to Ser-1249, Ala-1332 to His-1648, and Gly-1684 to Ile-1709. The segment covering Tyr-592–Gln-606 has biased composition (low complexity). A compositionally biased stretch (gly residues) spans Asn-644–Gly-655. The segment covering Gln-678–Ser-695 has biased composition (polar residues). A compositionally biased stretch (low complexity) spans Ser-713 to Gln-771. Polar residues predominate over residues Tyr-772 to Ser-784. Low complexity predominate over residues Ala-893–Ser-904. Low complexity predominate over residues Gly-1176 to Thr-1197. Over residues Ser-1220 to Tyr-1231 the composition is skewed to polar residues. Residues Ala-1381 to Pro-1392 are compositionally biased toward low complexity. The span at Thr-1430–Tyr-1443 shows a compositional bias: polar residues. The segment covering Ala-1503–Ser-1521 has biased composition (low complexity). Polar residues-rich tracts occupy residues Ala-1554–Glu-1565 and Phe-1579–Arg-1596. Residues Ser-1608–Ala-1633 show a composition bias toward low complexity. The segment covering Gly-1684–Ala-1705 has biased composition (gly residues).

Interacts with hfp; however, given the nuclear localization of hfp, the relevance of such interaction is unclear. Interacts with CycE, Cul1, and the SCF-proteasome complex. As to expression, expressed in all germline cells of the germarium including the stem cells and dividing cystocytes.

Its subcellular location is the cytoplasm. Functionally, required for the regulation of germline mitosis, karyosome formation, and establishment of dorsoventral (DS) polarity of the egg and embryo. Involved in proper grk mRNA localization and translation in the oocyte. May control germline mitosis by facilitating the cyclin E (CycE) proteolysis by the SCF-ubiquitin-proteasome complex. In Drosophila melanogaster (Fruit fly), this protein is Protein encore (enc).